A 267-amino-acid chain; its full sequence is Regulatory protein RecX (267 aa).

This sequence belongs to the RecX family.

It is found in the cytoplasm. In terms of biological role, modulates RecA activity. The protein is Regulatory protein RecX of Staphylococcus carnosus (strain TM300).